The following is a 984-amino-acid chain: Ephrin type-B receptor 1 (984 aa).

Positions 1-17 are cleaved as a signal peptide; it reads MALDCLLLFLLASAVAA. Topologically, residues 18–540 are extracellular; sequence MEETLMDTRT…YKSELREQLP (523 aa). Residues 19–201 enclose the Eph LBD domain; sequence EETLMDTRTA…FFKKCPSIVQ (183 aa). 2 Fibronectin type-III domains span residues 322–432 and 433–528; these read VPSG…TNQA and APST…TLTD. Asn-334, Asn-426, and Asn-480 each carry an N-linked (GlcNAc...) asparagine glycan. A helical transmembrane segment spans residues 541-563; sequence LIAGSAAAGVVFVVSLVAISIVC. The Cytoplasmic portion of the chain corresponds to 564 to 984; that stretch reads SRKRAYSKEA…QMNQSPSVMA (421 aa). Tyr-600 carries the post-translational modification Phosphotyrosine. A Protein kinase domain is found at 619 to 882; sequence VKIEEVIGAG…EIVNTLDKMI (264 aa). ATP-binding positions include 625-633 and Lys-651; that span reads IGAGEFGEV. The Proton acceptor role is filled by Asp-744. The SAM domain maps to 911-975; it reads TAFTTVDDWL…LSSIHSMRVQ (65 aa). Tyr-928 carries the phosphotyrosine; by autocatalysis modification. The PDZ-binding signature appears at 982–984; sequence VMA.

This sequence belongs to the protein kinase superfamily. Tyr protein kinase family. Ephrin receptor subfamily. As to quaternary structure, heterotetramer upon binding of the ligand. The heterotetramer is composed of an ephrin dimer and a receptor dimer. Oligomerization is probably required to induce biological responses. Interacts with EPHB6; transphosphorylates EPHB6 to form an active signaling complex. Interacts with PICK1. Interacts (through Tyr-594) with NCK1 (via SH2 domain); activates the JUN cascade to regulate cell adhesion. The ligand-activated form interacts (through Tyr-928) with GRB7 and GRB10 (via SH2 domains). The ligand-activated form interacts (residues within the catalytic domain) with GRB2 (via SH2 domain). Interacts with GRB2, SHC1 and SRC; activates the MAPK/ERK cascade to regulate cell migration. Interacts with CBL; regulates receptor degradation through ubiquitination. Interacts with ACP1. Phosphorylated. Autophosphorylation is stimulated by the ligand EFNB1. Required for interaction with SH2 domain-containing interactors, for activation of the MAPK/ERK and JUN signaling cascades and for ubiquitination by CBL. In terms of processing, ubiquitinated; (EFNB1)ligand-induced poly- and/or multi-ubiquitination by CBL is regulated by SRC and leads to lysosomal degradation. In terms of tissue distribution, expressed in neural stem and progenitor cells in the dentate gyrus. Expressed in myogenic progenitor cells.

The protein resides in the cell membrane. The protein localises to the early endosome membrane. Its subcellular location is the cell projection. It localises to the dendrite. The enzyme catalyses L-tyrosyl-[protein] + ATP = O-phospho-L-tyrosyl-[protein] + ADP + H(+). In terms of biological role, receptor tyrosine kinase which binds promiscuously transmembrane ephrin-B family ligands residing on adjacent cells, leading to contact-dependent bidirectional signaling into neighboring cells. The signaling pathway downstream of the receptor is referred to as forward signaling while the signaling pathway downstream of the ephrin ligand is referred to as reverse signaling. Cognate/functional ephrin ligands for this receptor include EFNB1, EFNB2 and EFNB3. During nervous system development, regulates retinal axon guidance redirecting ipsilaterally ventrotemporal retinal ganglion cells axons at the optic chiasm midline. This probably requires repulsive interaction with EFNB2. In the adult nervous system together with EFNB3, regulates chemotaxis, proliferation and polarity of the hippocampus neural progenitors. In addition to its role in axon guidance also plays an important redundant role with other ephrin-B receptors in development and maturation of dendritic spines and synapse formation. May also regulate angiogenesis. More generally, may play a role in targeted cell migration and adhesion. Upon activation by EFNB1 and probably other ephrin-B ligands activates the MAPK/ERK and the JNK signaling cascades to regulate cell migration and adhesion respectively. Involved in the maintenance of the pool of satellite cells (muscle stem cells) by promoting their self-renewal and reducing their activation and differentiation. The polypeptide is Ephrin type-B receptor 1 (Ephb1) (Mus musculus (Mouse)).